A 176-amino-acid polypeptide reads, in one-letter code: Crossover junction endodeoxyribonuclease RuvC (176 aa).

Catalysis depends on residues Asp8, Glu69, and Asp141. Asp8, Glu69, and Asp141 together coordinate Mg(2+).

It belongs to the RuvC family. Homodimer which binds Holliday junction (HJ) DNA. The HJ becomes 2-fold symmetrical on binding to RuvC with unstacked arms; it has a different conformation from HJ DNA in complex with RuvA. In the full resolvosome a probable DNA-RuvA(4)-RuvB(12)-RuvC(2) complex forms which resolves the HJ. Mg(2+) serves as cofactor.

The protein localises to the cytoplasm. It carries out the reaction Endonucleolytic cleavage at a junction such as a reciprocal single-stranded crossover between two homologous DNA duplexes (Holliday junction).. Functionally, the RuvA-RuvB-RuvC complex processes Holliday junction (HJ) DNA during genetic recombination and DNA repair. Endonuclease that resolves HJ intermediates. Cleaves cruciform DNA by making single-stranded nicks across the HJ at symmetrical positions within the homologous arms, yielding a 5'-phosphate and a 3'-hydroxyl group; requires a central core of homology in the junction. The consensus cleavage sequence is 5'-(A/T)TT(C/G)-3'. Cleavage occurs on the 3'-side of the TT dinucleotide at the point of strand exchange. HJ branch migration catalyzed by RuvA-RuvB allows RuvC to scan DNA until it finds its consensus sequence, where it cleaves and resolves the cruciform DNA. The protein is Crossover junction endodeoxyribonuclease RuvC of Pseudomonas syringae pv. tomato (strain ATCC BAA-871 / DC3000).